The chain runs to 182 residues: Lipoprotein signal peptidase (182 aa).

4 consecutive transmembrane segments (helical) span residues 15–35 (IYLG…FLVI), 44–64 (LEVF…FVFG), 65–85 (AFQD…VFLI), and 97–117 (PWGW…KFFV). Active-site residues include aspartate 140 and aspartate 162. A helical membrane pass occupies residues 155 to 175 (WPAFNVADSCVTIGLTILIFT).

Belongs to the peptidase A8 family.

The protein resides in the cell inner membrane. It carries out the reaction Release of signal peptides from bacterial membrane prolipoproteins. Hydrolyzes -Xaa-Yaa-Zaa-|-(S,diacylglyceryl)Cys-, in which Xaa is hydrophobic (preferably Leu), and Yaa (Ala or Ser) and Zaa (Gly or Ala) have small, neutral side chains.. Its pathway is protein modification; lipoprotein biosynthesis (signal peptide cleavage). Its function is as follows. This protein specifically catalyzes the removal of signal peptides from prolipoproteins. This chain is Lipoprotein signal peptidase, found in Leptospira interrogans serogroup Icterohaemorrhagiae serovar Lai (strain 56601).